The sequence spans 1442 residues: Cleavage and polyadenylation specificity factor subunit 1 (1442 aa).

The protein belongs to the CPSF1 family. As to quaternary structure, component of the CPSF complex, at least composed of CPSF160, CPSF100, CPSF73-I, CPSF73-II, CPSF30, FY and FIPS5. Forms a complex with cleavage and polyadenylation specificity factor (CPSF) subunits FY, CPSF30, CPSF73-I, CPSF 73-II and CPSF100.

The protein resides in the nucleus. Functionally, CPSF plays a key role in pre-mRNA 3'-end formation, recognizing the AAUAAA signal sequence and interacting with poly(A)polymerase and other factors to bring about cleavage and poly(A) addition. This subunit is involved in the RNA recognition step of the polyadenylation reaction. This chain is Cleavage and polyadenylation specificity factor subunit 1 (CPSF160), found in Arabidopsis thaliana (Mouse-ear cress).